The chain runs to 169 residues: Caltractin (169 aa).

The interval 1–24 is disordered; sequence MSYRKTVVSARRDQKKGRVGGLTE. EF-hand domains are found at residues 25 to 60, 61 to 96, 98 to 133, and 134 to 169; these read EQKQEIREAFDLFDTDGSGTIDAKELKVAMRALGFE, PKKEEIKKMIADIDKAGSGTIDFEEFLQMMTSKMGE, DSREEIIKAFKLFDDDNTGFITLKNLKRVAKELGEN, and LTDEELQEMTDEADRNGDGQIDEDEFYRIMKKTSLF. Ca(2+)-binding residues include D38, D40, S42, T44, and E49. Residues D147, N149, D151, Q153, and E158 each coordinate Ca(2+).

It belongs to the centrin family.

This calcium-binding protein is found in the basal body complexes (the functional homolog of the centrosome in animal cell). In mitotic cells it is specifically associated with the poles of the mitotic spindles at the sites of the duplicated basal body complexes. This chain is Caltractin, found in Dunaliella salina (Green alga).